The primary structure comprises 228 residues: MALREGPTPARFLPEGLVFCVEGNIGCGKSTLVKALMERVAGSGVNVVEEPVDQWVNHNGKNYLELSYTDPTGYAVPFQNLVFDSYVNVQRLQNPDIMERSPMSATRVFCAVNGSRGVIPATALPGMAARGEAVMRTIATRPVFVYLELPPEECLRRMRRRDRTGEAGVGLDYLRLLHERYEAWLSSAEDVERVDASRSREEIVDRVIEILCRRHPRLRAPLTRKSQL.

Position 23-30 (23-30 (GNIGCGKS)) interacts with ATP. Glu50 (proton acceptor) is an active-site residue. Tyr68, Gln79, and Phe109 together coordinate substrate. Position 157 (Arg157) interacts with ATP.

Belongs to the DCK/DGK family.

It catalyses the reaction thymidine + ATP = dTMP + ADP + H(+). This chain is Thymidine kinase (TK), found in Ictaluridae (bullhead catfishes).